The primary structure comprises 31 residues: Cyclotide cter-E (31 aa).

Residues 1–31 (GIPCAESCVWIPCTVTALLGCSCKDKVCYLD) constitute a cross-link (cyclopeptide (Gly-Asp)). Intrachain disulfides connect C4/C21, C8/C23, and C13/C28.

In terms of processing, contains 3 disulfide bonds. This is a cyclic peptide.

In terms of biological role, probably participates in a plant defense mechanism. This is Cyclotide cter-E from Clitoria ternatea (Butterfly pea).